Here is a 149-residue protein sequence, read N- to C-terminus: 3-dehydroquinate dehydratase (149 aa).

The Proton acceptor role is filled by Y26. Residues N77, H83, and D90 each contribute to the substrate site. H103 (proton donor) is an active-site residue. Substrate is bound by residues 104 to 105 (LS) and R114.

The protein belongs to the type-II 3-dehydroquinase family. As to quaternary structure, homododecamer.

It catalyses the reaction 3-dehydroquinate = 3-dehydroshikimate + H2O. It functions in the pathway metabolic intermediate biosynthesis; chorismate biosynthesis; chorismate from D-erythrose 4-phosphate and phosphoenolpyruvate: step 3/7. In terms of biological role, catalyzes a trans-dehydration via an enolate intermediate. The chain is 3-dehydroquinate dehydratase from Haemophilus influenzae (strain PittGG).